We begin with the raw amino-acid sequence, 110 residues long: uncharacterized protein (110 aa).

Residues 1 to 16 form the signal peptide; sequence MKKILLIASMTAGLTA. C17 carries the N-palmitoyl cysteine lipid modification. C17 carries the S-diacylglycerol cysteine lipid modification.

The protein localises to the cell membrane. This is an uncharacterized protein from Salmonella typhimurium (strain LT2 / SGSC1412 / ATCC 700720).